Reading from the N-terminus, the 275-residue chain is GVSVSHASKKITRATTIFSNTEYENFTEAETIRGNVTQRSQSSDDFTRIVGGENAKPGQFPWQVLLNGKVEAFCGGSIINEKWVVTAAHCIKPDDNITVVAGEYNIQETENTEQKRNVIRIIPYHKYNATINKYNHDIALLELDKPLTLNSYVTPICIANREYTNIFLNFGSGYVSGWGRVFNRGRQASILQYLRVPFVDRATCLRSTKFTIYNNMFCAGFDVGGKDSCEGDSGGPHVTEVEGTSFLTGIISWGEECAIKGKYGVYTRVSWYVNW.

Tyr-23 carries the post-translational modification Sulfotyrosine. Asn-25 carries an N-linked (GlcNAc...) asparagine glycan. At Thr-27 the chain carries Phosphothreonine. A glycan (N-linked (GlcNAc...) asparagine) is linked at Asn-35. An O-linked (GalNAc...) threonine glycan is attached at Thr-47. Residues 49 to 275 (IVGGENAKPG…YTRVSWYVNW (227 aa)) enclose the Peptidase S1 domain. Cys-74 and Cys-90 are joined by a disulfide. His-89 (charge relay system) is an active-site residue. Asn-96 is a glycosylation site (N-linked (GlcNAc...) asparagine). Ca(2+) contacts are provided by Glu-103, Asn-105, Glu-108, Glu-110, and Glu-113. The N-linked (GlcNAc...) asparagine glycan is linked to Asn-128. The Charge relay system role is filled by Asp-137. Intrachain disulfides connect Cys-204-Cys-218 and Cys-229-Cys-257. The Charge relay system role is filled by Ser-233.

Belongs to the peptidase S1 family. Heterodimer of a light chain and a heavy chain; disulfide-linked. Interacts (inactive and activated) with F11 (activated) in calcium-dependent manner. Interacts with SERPINC1. Post-translationally, activated by factor XIa, which excises the activation peptide. The propeptide can also be removed by snake venom protease. Activated by coagulation factor VIIa-tissue factor (F7-F3) complex in calcium-dependent manner.

Its subcellular location is the secreted. The catalysed reaction is Selective cleavage of Arg-|-Ile bond in factor X to form factor Xa.. Its function is as follows. Factor IX is a vitamin K-dependent plasma protein that participates in the intrinsic pathway of blood coagulation by converting factor X to its active form in the presence of Ca(2+) ions, phospholipids, and factor VIIIa. The chain is Coagulation factor IX (F9) from Oryctolagus cuniculus (Rabbit).